A 388-amino-acid chain; its full sequence is MNIHEYQGKEIFRSMGVAVPEGRVAFTAEEAVEKAKELNSDVYVVKAQIHAGGRGKAGGVKIAKSLSEVETYANELLGKQLVTHQTGPEGKEVKRLYIEEGCDIQKEYYVGFVIDRATDKVTLMASEEGGTEIEEVAAQTPEKIFKETIDPVVGLSPYQARRIAFNINIPKESVGKATKFLLALYNVFIEKDCSIVEINPLVTTGDGQVLALDAKLNFDDNALFRHKDILELRDLEEEDPKEIEASKYDLSYIALDGDIGCMVNGAGLAMATMDTINHFGGNPANFLDVGGGATKEKVTEAFKIILGDDNVKGIFVNIFGGIMKCDVIAEGIVAAVKEVELTLPLVVRLEGTNVERGKAILNESGLAIEPAATMAEGAQKIVKLVKEA.

An ATP-grasp domain is found at 9-244; it reads KEIFRSMGVA…LEEEDPKEIE (236 aa). ATP is bound by residues Lys46, 53 to 55, Glu99, Cys102, and Glu107; that span reads GRG. 2 residues coordinate Mg(2+): Asn199 and Asp213. Residues Asn264 and 321–323 each bind substrate; that span reads GIM.

This sequence belongs to the succinate/malate CoA ligase beta subunit family. Heterotetramer of two alpha and two beta subunits. It depends on Mg(2+) as a cofactor.

The enzyme catalyses succinate + ATP + CoA = succinyl-CoA + ADP + phosphate. It catalyses the reaction GTP + succinate + CoA = succinyl-CoA + GDP + phosphate. Its pathway is carbohydrate metabolism; tricarboxylic acid cycle; succinate from succinyl-CoA (ligase route): step 1/1. Functionally, succinyl-CoA synthetase functions in the citric acid cycle (TCA), coupling the hydrolysis of succinyl-CoA to the synthesis of either ATP or GTP and thus represents the only step of substrate-level phosphorylation in the TCA. The beta subunit provides nucleotide specificity of the enzyme and binds the substrate succinate, while the binding sites for coenzyme A and phosphate are found in the alpha subunit. The protein is Succinate--CoA ligase [ADP-forming] subunit beta of Staphylococcus epidermidis (strain ATCC 35984 / DSM 28319 / BCRC 17069 / CCUG 31568 / BM 3577 / RP62A).